A 219-amino-acid chain; its full sequence is Segregation and condensation protein B (219 aa).

The segment at 193–219 (SLFAGGEEPSAEAADGGAGESTHGEEE) is disordered. Residues 196–207 (AGGEEPSAEAAD) are compositionally biased toward low complexity.

This sequence belongs to the ScpB family. As to quaternary structure, homodimer. Homodimerization may be required to stabilize the binding of ScpA to the Smc head domains. Component of a cohesin-like complex composed of ScpA, ScpB and the Smc homodimer, in which ScpA and ScpB bind to the head domain of Smc. The presence of the three proteins is required for the association of the complex with DNA.

It is found in the cytoplasm. Participates in chromosomal partition during cell division. May act via the formation of a condensin-like complex containing Smc and ScpA that pull DNA away from mid-cell into both cell halves. This chain is Segregation and condensation protein B, found in Symbiobacterium thermophilum (strain DSM 24528 / JCM 14929 / IAM 14863 / T).